Here is a 262-residue protein sequence, read N- to C-terminus: Thiazole synthase (262 aa).

The Schiff-base intermediate with DXP role is filled by Lys96. 1-deoxy-D-xylulose 5-phosphate contacts are provided by residues Gly157, Ala184–Gly185, and Asn206–Thr207.

The protein belongs to the ThiG family. In terms of assembly, homotetramer. Forms heterodimers with either ThiH or ThiS.

It localises to the cytoplasm. The enzyme catalyses [ThiS sulfur-carrier protein]-C-terminal-Gly-aminoethanethioate + 2-iminoacetate + 1-deoxy-D-xylulose 5-phosphate = [ThiS sulfur-carrier protein]-C-terminal Gly-Gly + 2-[(2R,5Z)-2-carboxy-4-methylthiazol-5(2H)-ylidene]ethyl phosphate + 2 H2O + H(+). It functions in the pathway cofactor biosynthesis; thiamine diphosphate biosynthesis. Catalyzes the rearrangement of 1-deoxy-D-xylulose 5-phosphate (DXP) to produce the thiazole phosphate moiety of thiamine. Sulfur is provided by the thiocarboxylate moiety of the carrier protein ThiS. In vitro, sulfur can be provided by H(2)S. This is Thiazole synthase from Legionella pneumophila (strain Lens).